The sequence spans 140 residues: 5-NmdU N-acetyltransferase (140 aa).

In terms of domain architecture, N-acetyltransferase spans 2–140 (IVVRKALPEE…GEGLALFKEW (139 aa)).

The protein belongs to the acetyltransferase family.

The catalysed reaction is 5-aminomethyl-dUMP in DNA + acetyl-CoA = 5-acetylaminomethyl-dUMP in DNA + CoA + H(+). Acetylates 5-aminomethyl-2'-deoxyuridine (5-NmdU) to produce 5-acetylaminomethyl-2'-deoxyuridine (5-AcNmdU) on DNA as a step in the pathway leading to thymidine hypermodifications in the viral genome. As a final result of the pathway of hypermodification, 5-acetylaminomethyl-2'-deoxyuridine (5-AcNmdU) substitutes for a subset of thymidines in the viral DNA. These modifications probably prevent degradation of viral genome by the host restriction-modification antiviral defense system. In Pseudomonas aeruginosa, this protein is 5-NmdU N-acetyltransferase.